Reading from the N-terminus, the 499-residue chain is Glycerol kinase (499 aa).

ADP is bound at residue Thr-13. ATP-binding residues include Thr-13, Thr-14, and Ser-15. Thr-13 lines the sn-glycerol 3-phosphate pocket. An ADP-binding site is contributed by Arg-17. Arg-83, Glu-84, Tyr-135, and Asp-245 together coordinate sn-glycerol 3-phosphate. The glycerol site is built by Arg-83, Glu-84, Tyr-135, Asp-245, and Gln-246. ADP contacts are provided by Thr-267 and Gly-310. Residues Thr-267, Gly-310, Gln-314, and Gly-411 each coordinate ATP. Residues Gly-411 and Asn-415 each coordinate ADP.

It belongs to the FGGY kinase family.

It catalyses the reaction glycerol + ATP = sn-glycerol 3-phosphate + ADP + H(+). The protein operates within polyol metabolism; glycerol degradation via glycerol kinase pathway; sn-glycerol 3-phosphate from glycerol: step 1/1. Its activity is regulated as follows. Inhibited by fructose 1,6-bisphosphate (FBP). In terms of biological role, key enzyme in the regulation of glycerol uptake and metabolism. Catalyzes the phosphorylation of glycerol to yield sn-glycerol 3-phosphate. This chain is Glycerol kinase, found in Stenotrophomonas maltophilia (strain K279a).